We begin with the raw amino-acid sequence, 503 residues long: UDP-N-acetylmuramoylalanine--D-glutamate ligase (503 aa).

Gly129–Thr135 provides a ligand contact to ATP.

This sequence belongs to the MurCDEF family.

Its subcellular location is the cytoplasm. It catalyses the reaction UDP-N-acetyl-alpha-D-muramoyl-L-alanine + D-glutamate + ATP = UDP-N-acetyl-alpha-D-muramoyl-L-alanyl-D-glutamate + ADP + phosphate + H(+). Its pathway is cell wall biogenesis; peptidoglycan biosynthesis. Its function is as follows. Cell wall formation. Catalyzes the addition of glutamate to the nucleotide precursor UDP-N-acetylmuramoyl-L-alanine (UMA). The protein is UDP-N-acetylmuramoylalanine--D-glutamate ligase of Burkholderia orbicola (strain MC0-3).